The following is a 466-amino-acid chain: MGWITEDLIRRNAEHNDCVIFSLEELSLHQQEIERLEHIDKWCRDLKILYLQNNLIGKIENVSKLKKLEYLNLALNNIEKIENLEGCEELAKLDLTVNFIGELSSIKTLKHNIHLKELFLMGNPCAFFDHYREFVVATLPQLKWLDGKGIEPSERIKALQEYSIIEPQIREQEKDHCLKRAKLKEEAQRKHQEEDKNEDKRSNAGFDGRWYTDINATLSSLESKDHLQAPDTEEHNTKKLDNSEDDLEFWNKPCLFTPESRLETLRHMEKQRKNQEKLSERKKKVKPPRTLITEDGKALNVNEPKIDFSLKDNEKQIILDLAVYRYMDTSLINVDVQPTYVRVMIKGKPFQLVLPAEVKPDSSSAKRSQTTGHLVICMPKVGEVITGGQRAFTSVKTTSDRSREHINTRSKHMEKLEVDPSKHSFPDVTNIVQGKKHTPRRRPEPKIIPSEEDPTFEDNPEVPPLI.

LRR repeat units lie at residues 22–43, 45–66, 67–88, and 89–110; these read SLEE…DKWC, DLKI…SKLK, KLEY…EGCE, and ELAK…KTLK. An LRRCT domain is found at 123–161; it reads NPCAFFDHYREFVVATLPQLKWLDGKGIEPSERIKALQE. Residues 178–204 are a coiled coil; that stretch reads LKRAKLKEEAQRKHQEEDKNEDKRSNA. Composition is skewed to basic and acidic residues over residues 185–202 and 269–279; these read EEAQ…DKRS and EKQRKNQEKLS. 2 disordered regions span residues 185–206 and 269–288; these read EEAQ…NAGF and EKQR…VKPP. The region spanning 301-396 is the CS domain; sequence VNEPKIDFSL…GGQRAFTSVK (96 aa). A disordered region spans residues 418–466; the sequence is VDPSKHSFPDVTNIVQGKKHTPRRRPEPKIIPSEEDPTFEDNPEVPPLI. Residues 450-460 are compositionally biased toward acidic residues; sequence SEEDPTFEDNP.

This sequence belongs to the tilB family. In terms of assembly, interacts (via CS domain) with ZMYND10 (via C-terminus).

It localises to the cytoplasm. The protein localises to the cell projection. Its subcellular location is the cilium. May play a role in dynein arm assembly, hence essential for proper axoneme building for cilia motility. The polypeptide is Protein tilB homolog (LRCC6) (Macaca fascicularis (Crab-eating macaque)).